The following is a 158-amino-acid chain: DNA-binding transcriptional repressor RacR (158 aa).

As to quaternary structure, homooctamer.

Its function is as follows. Transcriptional regulator that represses the expression of ydaS and ydaT under normal physiological conditions. It binds to its own upstream sequence and represses the adjacent and divergently coded ydaS-ydaT operon. RacR-mediated down-regulation of ydaS and ydaT may be critical for cell survival. RacR ensures that the prophage DNA is maintained in the genome. When the expression of the racR gene is reduced, the prophage Rac is excised from the genome, possibly to counteract the lethal toxicity of YdaT. The sequence is that of DNA-binding transcriptional repressor RacR (racR) from Escherichia coli (strain K12).